The sequence spans 310 residues: HMG box-containing protein C28F2.11 (310 aa).

Residues 69 to 95 (ESPSKKATSPKKATPAAVAPVEATSAV) are compositionally biased toward low complexity. Residues 69–310 (ESPSKKATSP…TTPPTAKVAN (242 aa)) form a disordered region. Residue Ser-70 is modified to Phosphoserine. Thr-105 is modified (phosphothreonine). The HMG box DNA-binding region spans 117 to 187 (PKRPPSAYNL…AYEEEMAAYN (71 aa)). Composition is skewed to basic and acidic residues over residues 131–178 (QRSE…LREA) and 200–226 (VTAEETSTKPSEDLSSPTKKDLIDFSE). Ser-161, Ser-214, and Ser-215 each carry phosphoserine. 2 positions are modified to phosphothreonine: Thr-217 and Thr-237. Over residues 255–268 (STVPTSNVEPVSQP) the composition is skewed to polar residues. Phosphoserine occurs at positions 271, 278, 294, 295, and 297. Residues Thr-302 and Thr-305 each carry the phosphothreonine modification.

Its subcellular location is the cytoplasm. This chain is HMG box-containing protein C28F2.11, found in Schizosaccharomyces pombe (strain 972 / ATCC 24843) (Fission yeast).